A 184-amino-acid chain; its full sequence is Ribosome-recycling factor (184 aa).

Belongs to the RRF family.

The protein localises to the cytoplasm. Responsible for the release of ribosomes from messenger RNA at the termination of protein biosynthesis. May increase the efficiency of translation by recycling ribosomes from one round of translation to another. In Caldicellulosiruptor bescii (strain ATCC BAA-1888 / DSM 6725 / KCTC 15123 / Z-1320) (Anaerocellum thermophilum), this protein is Ribosome-recycling factor.